The following is a 123-amino-acid chain: uncharacterized protein (123 aa).

The N-terminal stretch at M1–A20 is a signal peptide. G96 carries GPI-anchor amidated glycine lipidation. The propeptide at S97 to H123 is removed in mature form.

The protein localises to the cell membrane. This is an uncharacterized protein from Schizosaccharomyces pombe (strain 972 / ATCC 24843) (Fission yeast).